A 166-amino-acid polypeptide reads, in one-letter code: Phosphopantetheine adenylyltransferase (166 aa).

Serine 8 is a substrate binding site. Residues 8–9 (SF) and histidine 16 each bind ATP. 3 residues coordinate substrate: lysine 40, threonine 72, and arginine 86. ATP contacts are provided by residues 87 to 89 (GLR), glutamate 97, and 122 to 128 (YSFLSSS).

The protein belongs to the bacterial CoaD family. Homohexamer. Mg(2+) serves as cofactor.

The protein localises to the cytoplasm. The enzyme catalyses (R)-4'-phosphopantetheine + ATP + H(+) = 3'-dephospho-CoA + diphosphate. Its pathway is cofactor biosynthesis; coenzyme A biosynthesis; CoA from (R)-pantothenate: step 4/5. Functionally, reversibly transfers an adenylyl group from ATP to 4'-phosphopantetheine, yielding dephospho-CoA (dPCoA) and pyrophosphate. The sequence is that of Phosphopantetheine adenylyltransferase from Synechococcus elongatus (strain ATCC 33912 / PCC 7942 / FACHB-805) (Anacystis nidulans R2).